Reading from the N-terminus, the 122-residue chain is MGYRKLGRTSDQRKAMLRDLATSLIVSERIETTEARAKEVRSVVEKLITLGKKGDLASRRNAAKTLRNVEILNEDDSTQTALQKLFGEIAERYSERQGGYTRILKVGPRRGDGAESVIIELV.

Belongs to the bacterial ribosomal protein bL17 family. In terms of assembly, part of the 50S ribosomal subunit. Contacts protein L32.

The chain is Large ribosomal subunit protein bL17 from Staphylococcus epidermidis (strain ATCC 35984 / DSM 28319 / BCRC 17069 / CCUG 31568 / BM 3577 / RP62A).